We begin with the raw amino-acid sequence, 459 residues long: Vasoactive intestinal polypeptide receptor 1 (459 aa).

A signal peptide spans 1 to 30; sequence MRPPSLPPARWLCVLAGALACALGPAGSRA. Over 31-142 the chain is Extracellular; the sequence is ASPHQECEYL…EQQQTEFYDA (112 aa). 5 disulfides stabilise this stretch: C37–C209, C50–C72, C63–C105, C86–C122, and C216–C286. Residues N58, N69, N100, and N104 are each glycosylated (N-linked (GlcNAc...) asparagine). The helical transmembrane segment at 143 to 167 threads the bilayer; sequence VKTGYTIGYSLSLASLLVAMAILSL. Over 168–175 the chain is Cytoplasmic; it reads FRKLHCTR. The helical transmembrane segment at 176 to 197 threads the bilayer; the sequence is NYIHMHLFMSFILRATAVFIKD. At 198–217 the chain is on the extracellular side; the sequence is MALFNNGETDHCSEASVSCK. A helical membrane pass occupies residues 218 to 242; sequence AAVVFFQYCVMANFFWLLVEGLYLH. Over 243–255 the chain is Cytoplasmic; the sequence is TLLAVSFFSERKY. The chain crosses the membrane as a helical span at residues 256–277; it reads FWGYILIGWGVPSVFIMIWTIV. The Extracellular segment spans residues 278–293; the sequence is RIHFEDFGCWDTIINS. The N-linked (GlcNAc...) asparagine glycan is linked to N292. A helical transmembrane segment spans residues 294–318; sequence SLWWIIKGPILISILVNFILFICII. Topologically, residues 319–340 are cytoplasmic; the sequence is RILVQKLRPPDIGKNDSSPYSR. Residues 341–361 form a helical membrane-spanning segment; sequence LAKSTLLLIPLFGVHYVMFAF. The Extracellular segment spans residues 362-369; the sequence is FPDNFKAQ. Residues 370–393 form a helical membrane-spanning segment; it reads VKMVFELVVGSFQGFVVAILYCFL. Residues 394–459 are Cytoplasmic-facing; the sequence is NGEVQAELRR…SSFQAEVSLV (66 aa).

Belongs to the G-protein coupled receptor 2 family. In terms of assembly, interacts with ADCYAP1/PACAP; activated by both PACAP27 and PACAP38 neuropeptides. Interacts with VIP; the interaction results in VIPR1 activation.

It localises to the cell membrane. G protein-coupled receptor activated by the neuropeptides vasoactive intestinal peptide (VIP) and pituitary adenylate cyclase-activating polypeptide (ADCYAP1/PACAP). Binds VIP and both PACAP27 and PACAP38 bioactive peptides with the following order of ligand affinity VIP = PACAP27 &gt; PACAP38. Ligand binding causes a conformation change that triggers signaling via guanine nucleotide-binding proteins (G proteins) and modulates the activity of downstream effectors. Activates cAMP-dependent pathway. The protein is Vasoactive intestinal polypeptide receptor 1 of Mus musculus (Mouse).